The following is a 410-amino-acid chain: Elongation factor Tu (410 aa).

A tr-type G domain is found at Lys-10–Glu-214. A G1 region spans residues Gly-19–Thr-26. Gly-19 to Thr-26 lines the GTP pocket. Residue Thr-26 coordinates Mg(2+). Residues Gly-60–Asn-64 are G2. The tract at residues Asp-81 to Gly-84 is G3. GTP-binding positions include Asp-81–His-85 and Asn-136–Asp-139. The tract at residues Asn-136–Asp-139 is G4. The G5 stretch occupies residues Ser-174–Leu-176.

This sequence belongs to the TRAFAC class translation factor GTPase superfamily. Classic translation factor GTPase family. EF-Tu/EF-1A subfamily. In terms of assembly, monomer.

The protein localises to the cytoplasm. The enzyme catalyses GTP + H2O = GDP + phosphate + H(+). Its function is as follows. GTP hydrolase that promotes the GTP-dependent binding of aminoacyl-tRNA to the A-site of ribosomes during protein biosynthesis. This Arthrospira platensis (Spirulina platensis) protein is Elongation factor Tu.